The sequence spans 163 residues: NADH-quinone oxidoreductase subunit I (163 aa).

2 consecutive 4Fe-4S ferredoxin-type domains span residues 54–84 (LRRYPNGEERCIACKLCEAVCPALAITIESD) and 94–123 (TRYDIDLTKCIFCGFCEEACPVDAIVETQI). [4Fe-4S] cluster-binding residues include Cys64, Cys67, Cys70, Cys74, Cys103, Cys106, Cys109, and Cys113.

It belongs to the complex I 23 kDa subunit family. NDH-1 is composed of 14 different subunits. Subunits NuoA, H, J, K, L, M, N constitute the membrane sector of the complex. [4Fe-4S] cluster serves as cofactor.

The protein localises to the cell inner membrane. It catalyses the reaction a quinone + NADH + 5 H(+)(in) = a quinol + NAD(+) + 4 H(+)(out). NDH-1 shuttles electrons from NADH, via FMN and iron-sulfur (Fe-S) centers, to quinones in the respiratory chain. The immediate electron acceptor for the enzyme in this species is believed to be ubiquinone. Couples the redox reaction to proton translocation (for every two electrons transferred, four hydrogen ions are translocated across the cytoplasmic membrane), and thus conserves the redox energy in a proton gradient. The protein is NADH-quinone oxidoreductase subunit I of Cupriavidus necator (strain ATCC 17699 / DSM 428 / KCTC 22496 / NCIMB 10442 / H16 / Stanier 337) (Ralstonia eutropha).